We begin with the raw amino-acid sequence, 448 residues long: ATP synthase subunit b-delta (448 aa).

The interval 1-168 (MSTFIGQLIG…GSVGAAKRPV (168 aa)) is ATP synthase subunit b. A helical membrane pass occupies residues 4–24 (FIGQLIGFAVIVFLVVKYVVP). An ATP synthase subunit delta region spans residues 169–448 (PGGYSGMHAA…LSAAALHLPN (280 aa)).

The protein in the N-terminal section; belongs to the ATPase B chain family. In the C-terminal section; belongs to the ATPase delta chain family. F-type ATPases have 2 components, F(1) - the catalytic core - and F(0) - the membrane proton channel. F(1) has five subunits: alpha(3), beta(3), gamma(1), delta(1), epsilon(1). F(0) has three main subunits: a(1), b(2) and c(10-14). The alpha and beta chains form an alternating ring which encloses part of the gamma chain. F(1) is attached to F(0) by a central stalk formed by the gamma and epsilon chains, while a peripheral stalk is formed by the delta and b chains.

Its subcellular location is the cell membrane. In terms of biological role, f(1)F(0) ATP synthase produces ATP from ADP in the presence of a proton or sodium gradient. F-type ATPases consist of two structural domains, F(1) containing the extramembraneous catalytic core and F(0) containing the membrane proton channel, linked together by a central stalk and a peripheral stalk. During catalysis, ATP synthesis in the catalytic domain of F(1) is coupled via a rotary mechanism of the central stalk subunits to proton translocation. This fusion protein includes a component of the F(0) channel (subunit b) and of the F(1) subunit (subunit delta). Two copies of subunit b and one of delta together form the peripheral 'stator' stalk which links F(1) to F(0). This is ATP synthase subunit b-delta (atpFH) from Mycobacteroides abscessus (strain ATCC 19977 / DSM 44196 / CCUG 20993 / CIP 104536 / JCM 13569 / NCTC 13031 / TMC 1543 / L948) (Mycobacterium abscessus).